The following is a 514-amino-acid chain: Myocyte-specific enhancer factor 2D (514 aa).

Residues 3–57 form the MADS-box domain; the sequence is RKKIQIQRITDERNRQVTFTKRKFGLMKKAYELSVLCDCEIALIIFNHSNKLFQY. Residues 58 to 86 constitute a DNA-binding region (mef2-type); the sequence is ASTDMDKVLLKYTEYNEPHESRTNADIIE. Phosphoserine is present on residues Asp-97, Ser-98, and Ser-106. Leu-107 carries the post-translational modification Phosphothreonine. Ser-110 bears the Phosphoserine mark. Ser-121 is subject to Phosphoserine; by PKA. Residues 174-207 form a disordered region; the sequence is TDPRLLSPQQPALQRNSVSPGLPQRPASAGAMLG. Ser-180 is subject to Phosphoserine; by MAPK7. Residues 180–192 show a composition bias toward polar residues; that stretch reads SPQQPALQRNSVS. Residue Ser-190 is modified to Phosphoserine; by PKA. Ser-231 is subject to Phosphoserine. The disordered stretch occupies residues 244–269; it reads NKVIPAKSPPPPTHNTQLGAPSRKPD. Lys-245 bears the N6-acetyllysine mark. At Ser-251 the chain carries Phosphoserine. Positions 286-292 are beta domain; sequence TEDHLDL. Disordered regions lie at residues 364–399 and 430–514; these read WQQP…QQPH and SIKS…WTLK. Over residues 367–396 the composition is skewed to pro residues; the sequence is PQPPQQPQPPQPPQSQPQPPQPQPQQPPQQ. Lys-432 carries the post-translational modification N6-acetyllysine; alternate. Lys-432 is covalently cross-linked (Glycyl lysine isopeptide (Lys-Gly) (interchain with G-Cter in SUMO); alternate). Ser-437 carries the post-translational modification Phosphoserine.

Belongs to the MEF2 family. Forms a complex with class II HDACs in undifferentiating cells. On myogenic differentiation, HDACs are released into the cytoplasm allowing MEF2s to interact with other proteins for activation. Interacts with HDAC4 (in undifferentiating cells); the interaction translocates MEF2D to nuclear dots. Forms a heterodimer with MEF2A. Interacts with MAPK7; the interaction phosphorylates but does not activate MEF2D. Interacts with MYOG. Interacts with CCAR2 and HDAC3. Phosphorylated on Ser-437 is which is required for Lys-432 sumoylation and inhibits transcriptional activity. Phosphorylation on this residue by CDK5 is dependent on p35 and calpains. Phosphorylated by PKA at Ser-121 and Ser-190 represses transcriptional activity in embryonic and postnatal skeletal muscle, and stabilizes protein levels. No in vitro phosphorylation by PKA on Thr-20. Phosphorylated and activated by CaMK4. Post-translationally, acetylated on Lys-432 by CREBBP. Acetylated by EP300. Deacetylated by SIRT1 and HDAC3. In terms of processing, sumoylated on Lys-432 with SUMO2 but not SUMO1; which inhibits transcriptional activity and myogenic activity. Desumoylated by SENP3. Proteolytically cleaved in cerebellar granule neurons by caspase 7 following neurotoxicity. Preferentially cleaves the CDK5-mediated hyperphosphorylated form which leads to neuron apoptosis and transcriptional inactivation. In terms of tissue distribution, widely expressed though mainly restricted to skeletal and cardiac muscle, brain, neurons and lymphocytes. Differentially expressed depending on if isoforms contain the beta domain or not, with the total expression of the beta domain-lacking isoforms vastly exceeding that of the beta domain-containing isoforms. Isoforms containing the beta domain are expressed primarily in skeletal and cardiac muscle and in brain. Also present in lung and testis. Splicing to include the beta domain is induced in differentiating myocytes. Isoforms lacking the beta domain are expressed less abundantly in skeletal muscle, brain and lymphocytes, and are uniquely found in ovary, liver, spleen and kidney. In embryos, the beta domain-containing and beta domain-lacking isoforms are equally expressed. Also expressed cerebellar granule neurons and other regions of the CNS. Highest levels in the olfactory bulb, cortex, hippocampus, thalamus and cerebellum.

The protein localises to the nucleus. Its function is as follows. Transcriptional activator which binds specifically to the MEF2 element, 5'-YTA[AT](4)TAR-3', found in numerous muscle-specific, growth factor- and stress-induced genes. Mediates cellular functions not only in skeletal and cardiac muscle development, but also in neuronal differentiation and survival. Plays diverse roles in the control of cell growth, survival and apoptosis via p38 MAPK signaling in muscle-specific and/or growth factor-related transcription. Plays a critical role in the regulation of neuronal apoptosis. The protein is Myocyte-specific enhancer factor 2D (Mef2d) of Mus musculus (Mouse).